Here is a 430-residue protein sequence, read N- to C-terminus: tRNA(Ile)-lysidine synthase (430 aa).

Residue 27-32 (SGGSDS) participates in ATP binding.

It belongs to the tRNA(Ile)-lysidine synthase family.

The protein resides in the cytoplasm. It carries out the reaction cytidine(34) in tRNA(Ile2) + L-lysine + ATP = lysidine(34) in tRNA(Ile2) + AMP + diphosphate + H(+). Its function is as follows. Ligates lysine onto the cytidine present at position 34 of the AUA codon-specific tRNA(Ile) that contains the anticodon CAU, in an ATP-dependent manner. Cytidine is converted to lysidine, thus changing the amino acid specificity of the tRNA from methionine to isoleucine. The sequence is that of tRNA(Ile)-lysidine synthase from Rickettsia felis (strain ATCC VR-1525 / URRWXCal2) (Rickettsia azadi).